A 142-amino-acid polypeptide reads, in one-letter code: 3-hydroxyacyl-[acyl-carrier-protein] dehydratase FabZ (142 aa).

The active site involves H48.

This sequence belongs to the thioester dehydratase family. FabZ subfamily.

The protein resides in the cytoplasm. The catalysed reaction is a (3R)-hydroxyacyl-[ACP] = a (2E)-enoyl-[ACP] + H2O. Functionally, involved in unsaturated fatty acids biosynthesis. Catalyzes the dehydration of short chain beta-hydroxyacyl-ACPs and long chain saturated and unsaturated beta-hydroxyacyl-ACPs. This is 3-hydroxyacyl-[acyl-carrier-protein] dehydratase FabZ from Natranaerobius thermophilus (strain ATCC BAA-1301 / DSM 18059 / JW/NM-WN-LF).